The sequence spans 167 residues: Sulfopyruvate decarboxylase subunit alpha (167 aa).

This sequence belongs to the ComD family. Heterododecamer composed of 6 subunits alpha and 6 subunits beta.

The enzyme catalyses 3-sulfopyruvate + H(+) = sulfoacetaldehyde + CO2. The protein operates within cofactor biosynthesis; coenzyme M biosynthesis; sulfoacetaldehyde from phosphoenolpyruvate and sulfite: step 4/4. In terms of biological role, involved in the biosynthesis of the coenzyme M (2-mercaptoethanesulfonic acid). Catalyzes the decarboxylation of sulfopyruvate to sulfoacetaldehyde. The sequence is that of Sulfopyruvate decarboxylase subunit alpha (comD) from Methanococcus maripaludis (strain DSM 14266 / JCM 13030 / NBRC 101832 / S2 / LL).